The following is a 226-amino-acid chain: NADH-ubiquinone oxidoreductase chain 6 (226 aa).

A run of 5 helical transmembrane segments spans residues 2–22 (STLG…FVIL), 28–48 (IYSI…LLTV), 56–76 (IYIL…VMMI), 90–110 (YNIY…ILIT), and 169–189 (IWFI…IYIT).

The protein belongs to the complex I subunit 6 family.

It is found in the mitochondrion membrane. It catalyses the reaction a ubiquinone + NADH + 5 H(+)(in) = a ubiquinol + NAD(+) + 4 H(+)(out). Functionally, core subunit of the mitochondrial membrane respiratory chain NADH dehydrogenase (Complex I) that is believed to belong to the minimal assembly required for catalysis. Complex I functions in the transfer of electrons from NADH to the respiratory chain. The immediate electron acceptor for the enzyme is believed to be ubiquinone. This Dictyostelium citrinum (Slime mold) protein is NADH-ubiquinone oxidoreductase chain 6 (nad6).